A 260-amino-acid polypeptide reads, in one-letter code: tRNA1(Val) (adenine(37)-N6)-methyltransferase (260 aa).

This sequence belongs to the methyltransferase superfamily. tRNA (adenine-N(6)-)-methyltransferase family.

The protein localises to the cytoplasm. It carries out the reaction adenosine(37) in tRNA1(Val) + S-adenosyl-L-methionine = N(6)-methyladenosine(37) in tRNA1(Val) + S-adenosyl-L-homocysteine + H(+). Specifically methylates the adenine in position 37 of tRNA(1)(Val) (anticodon cmo5UAC). This chain is tRNA1(Val) (adenine(37)-N6)-methyltransferase, found in Serratia proteamaculans (strain 568).